A 461-amino-acid polypeptide reads, in one-letter code: Cysteine--tRNA ligase (461 aa).

Cys-28 contributes to the Zn(2+) binding site. Residues 30–40 carry the 'HIGH' region motif; the sequence is ITIYDLCHIGH. Zn(2+) contacts are provided by Cys-209, His-234, and Glu-238. Residues 266–270 carry the 'KMSKS' region motif; the sequence is KMSKS. Residue Lys-269 coordinates ATP.

The protein belongs to the class-I aminoacyl-tRNA synthetase family. As to quaternary structure, monomer. The cofactor is Zn(2+).

Its subcellular location is the cytoplasm. The enzyme catalyses tRNA(Cys) + L-cysteine + ATP = L-cysteinyl-tRNA(Cys) + AMP + diphosphate. This is Cysteine--tRNA ligase from Photorhabdus laumondii subsp. laumondii (strain DSM 15139 / CIP 105565 / TT01) (Photorhabdus luminescens subsp. laumondii).